An 89-amino-acid chain; its full sequence is Large ribosomal subunit protein bL27 (89 aa).

A disordered region spans residues 1–24; it reads MAHKKGTGSTRNGRDSNAKRLGVK.

Belongs to the bacterial ribosomal protein bL27 family.

In Synechococcus sp. (strain JA-2-3B'a(2-13)) (Cyanobacteria bacterium Yellowstone B-Prime), this protein is Large ribosomal subunit protein bL27.